Here is a 107-residue protein sequence, read N- to C-terminus: MLVTTTPIIEGKRIVKYYGIVSGETIIGANVFRDLFASIRDIVGGRSGAYEEVLRMAKDTALQEMQAQAAKLGANAVIGVDLDYETVGGSGSMLMVTANGTAVTIED.

This sequence belongs to the UPF0145 family.

This is UPF0145 protein BT_3410 from Bacteroides thetaiotaomicron (strain ATCC 29148 / DSM 2079 / JCM 5827 / CCUG 10774 / NCTC 10582 / VPI-5482 / E50).